Here is a 412-residue protein sequence, read N- to C-terminus: FAD-dependent monooxygenase nscC (412 aa).

The first 21 residues, 1-21, serve as a signal peptide directing secretion; it reads MGKQQETILIIGAGISGLATS. FAD is bound by residues E35 and A46. N-linked (GlcNAc...) asparagine glycosylation is present at N92. FAD is bound at residue R119. N170 and N231 each carry an N-linked (GlcNAc...) asparagine glycan. Residues D326 and G339 each contribute to the FAD site.

Belongs to the paxM FAD-dependent monooxygenase family. FAD serves as cofactor.

The protein operates within secondary metabolite biosynthesis. Functionally, FAD-dependent monooxygenase; part of the gene cluster that mediates the biosynthesis of neosartoricin B, a prenylated anthracenone that probably exhibits T-cell antiproliferative activity, suggestive of a physiological role as an immunosuppressive agent. The non-reducing polyketide synthase nscA probably synthesizes and cyclizes the decaketide backbone. The hydrolase nscB then mediates the product release through hydrolysis followed by spontaneous decarboxylation. The prenyltransferase nscD catalyzes the addition of the dimethylallyl group to the aromatic C5. The FAD-dependent monooxygenase nscC is then responsible for the stereospecific hydroxylation at C2. Neosartoricin B can be converted into two additional compounds neosartoricins C and D. Neosartoricin C is a spirocyclic compound that is cyclized through the attack of C3 hydroxyl on C14, followed by dehydration. On the other hand, neosartoricin D is a further cyclized compound in which attack of C2 on C14 in neosartoricin C results in the formation of the acetal-containing dioxabicyclo-octanone ring. Both of these compounds are novel and possibly represent related metabolites of the gene cluster. This chain is FAD-dependent monooxygenase nscC, found in Trichophyton tonsurans (strain CBS 112818) (Scalp ringworm fungus).